The chain runs to 220 residues: ATP-dependent Clp protease proteolytic subunit (220 aa).

Residue Ser-125 is the Nucleophile of the active site. Residue His-150 is part of the active site.

It belongs to the peptidase S14 family. Fourteen ClpP subunits assemble into 2 heptameric rings which stack back to back to give a disk-like structure with a central cavity, resembling the structure of eukaryotic proteasomes.

It localises to the cytoplasm. It carries out the reaction Hydrolysis of proteins to small peptides in the presence of ATP and magnesium. alpha-casein is the usual test substrate. In the absence of ATP, only oligopeptides shorter than five residues are hydrolyzed (such as succinyl-Leu-Tyr-|-NHMec, and Leu-Tyr-Leu-|-Tyr-Trp, in which cleavage of the -Tyr-|-Leu- and -Tyr-|-Trp bonds also occurs).. Functionally, cleaves peptides in various proteins in a process that requires ATP hydrolysis. Has a chymotrypsin-like activity. Plays a major role in the degradation of misfolded proteins. The sequence is that of ATP-dependent Clp protease proteolytic subunit from Bacteroides fragilis (strain YCH46).